The following is a 657-amino-acid chain: tRNA uridine 5-carboxymethylaminomethyl modification enzyme MnmG (657 aa).

13–18 (GGGHAG) provides a ligand contact to FAD. 281 to 295 (GPRYCPSVEDKINRF) is an NAD(+) binding site.

The protein belongs to the MnmG family. As to quaternary structure, homodimer. Heterotetramer of two MnmE and two MnmG subunits. Requires FAD as cofactor.

It localises to the cytoplasm. Its function is as follows. NAD-binding protein involved in the addition of a carboxymethylaminomethyl (cmnm) group at the wobble position (U34) of certain tRNAs, forming tRNA-cmnm(5)s(2)U34. This chain is tRNA uridine 5-carboxymethylaminomethyl modification enzyme MnmG, found in Acidovorax ebreus (strain TPSY) (Diaphorobacter sp. (strain TPSY)).